A 120-amino-acid chain; its full sequence is Large ribosomal subunit protein uL18 (120 aa).

The protein belongs to the universal ribosomal protein uL18 family. As to quaternary structure, part of the 50S ribosomal subunit; part of the 5S rRNA/L5/L18/L25 subcomplex. Contacts the 5S and 23S rRNAs.

Its function is as follows. This is one of the proteins that bind and probably mediate the attachment of the 5S RNA into the large ribosomal subunit, where it forms part of the central protuberance. The polypeptide is Large ribosomal subunit protein uL18 (Bacillus cereus (strain AH820)).